Consider the following 198-residue polypeptide: Dephospho-CoA kinase (198 aa).

The 195-residue stretch at 4–198 (IIGITGGIAS…DSQLRRLQNE (195 aa)) folds into the DPCK domain. 12–17 (ASGKST) lines the ATP pocket.

It belongs to the CoaE family.

It localises to the cytoplasm. It catalyses the reaction 3'-dephospho-CoA + ATP = ADP + CoA + H(+). Its pathway is cofactor biosynthesis; coenzyme A biosynthesis; CoA from (R)-pantothenate: step 5/5. Its function is as follows. Catalyzes the phosphorylation of the 3'-hydroxyl group of dephosphocoenzyme A to form coenzyme A. The chain is Dephospho-CoA kinase from Streptococcus mutans serotype c (strain ATCC 700610 / UA159).